The primary structure comprises 248 residues: Adenylate kinase (248 aa).

37 to 42 contributes to the ATP binding site; that stretch reads GAGKGT. The tract at residues 57 to 86 is NMP; it reads SPGNLLREEMNRNSPITAQIKDYVSKGQLV. Residues Arg63, 84-86, 111-114, and Gln118 contribute to the AMP site; these read QLV and GFPR. The interval 149-181 is LID; sequence GRRFDPITGNTYHIIYDPPPPDIADRVVVRTDD. Arg150 lines the ATP pocket. AMP is bound by residues Arg178 and Arg189.

Belongs to the adenylate kinase family. Monomer.

Its subcellular location is the cytoplasm. The enzyme catalyses AMP + ATP = 2 ADP. Its function is as follows. Catalyzes the reversible transfer of the terminal phosphate group between ATP and AMP. Plays an important role in cellular energy homeostasis and in adenine nucleotide metabolism. This chain is Adenylate kinase, found in Giardia intestinalis (Giardia lamblia).